The sequence spans 464 residues: MSTAALVEGKIVQCIGAVIDVEFPRESMPKIYDALILDGSELTLEVQQQLGDGVVRTICLGASDGLRRGLTVKNTAKPISVPVGKPTLGRIMDVLGRPIDEAGPIESEHTRSIHQKAPAFDELSPSTELLETGIKVIDLICPFAKGGKVGLFGGAGVGKTVNMMELINNIAKEHGGYSVFAGVGERTREGNDFYHEMKDSNVLDKVALVYGQMNEPPGNRLRVALTGLTMAEHFRDEGLDVLFFVDNIYRFTLAGTEVSALLGRMPSAVGYQPTLAEEMGKLQERITSTKKGSITSVQAVYVPADDLTDPSPATTFGHLDATVVLSRDIASLGIYPAVDPLDSTSRQIDPNVIGEEHYSITRRVQQTLQRYKELRDIIAILGMDELSPEDKLSVARARKIQRFLSQPFHVAEVFTGSPGKYVPLKETIRGFKMIVDGECDHLPEQAFYMVGTIDEAFEKAKKIS.

Glycine 153–threonine 160 lines the ATP pocket.

It belongs to the ATPase alpha/beta chains family. F-type ATPases have 2 components, CF(1) - the catalytic core - and CF(0) - the membrane proton channel. CF(1) has five subunits: alpha(3), beta(3), gamma(1), delta(1), epsilon(1). CF(0) has three main subunits: a(1), b(2) and c(9-12). The alpha and beta chains form an alternating ring which encloses part of the gamma chain. CF(1) is attached to CF(0) by a central stalk formed by the gamma and epsilon chains, while a peripheral stalk is formed by the delta and b chains.

The protein localises to the cell inner membrane. It catalyses the reaction ATP + H2O + 4 H(+)(in) = ADP + phosphate + 5 H(+)(out). Functionally, produces ATP from ADP in the presence of a proton gradient across the membrane. The catalytic sites are hosted primarily by the beta subunits. In Burkholderia ambifaria (strain MC40-6), this protein is ATP synthase subunit beta.